Consider the following 881-residue polypeptide: Putative SWI/SNF-related matrix-associated actin-dependent regulator of chromatin subfamily A member 3-like 1 (881 aa).

Residues 272–486 form the Helicase ATP-binding domain; sequence DKRPDPLRGG…YSLMAFLRFE (215 aa). 285-292 contributes to the ATP binding site; the sequence is DDMGLGKT. A disordered region spans residues 308-343; sequence STSTPTEEPLDGEGDKIEKKGKKRGRGKSSESVTRK. The DEAH box motif lies at 437 to 440; the sequence is DEAH. The RING-type zinc finger occupies 635–674; the sequence is CPICISPPTNIIITRCAHIFCRACILQTLQRSKPLCPLCR. The interval 681–703 is disordered; the sequence is DLYNAPPPPPDSSNTDGEDAKSS. The region spanning 711-876 is the Helicase C-terminal domain; that stretch reads ALLSLLMASR…EREVNVEDVV (166 aa).

The protein belongs to the SNF2/RAD54 helicase family. RAD16 subfamily.

The protein localises to the nucleus. In terms of biological role, possesses intrinsic ATP-dependent nucleosome-remodeling activity. This activity may be required for transcriptional activation or repression of specific target promoters. This chain is Putative SWI/SNF-related matrix-associated actin-dependent regulator of chromatin subfamily A member 3-like 1, found in Arabidopsis thaliana (Mouse-ear cress).